The primary structure comprises 185 residues: Homeobox protein TGIF2LY (185 aa).

Disordered regions lie at residues Met1 to Pro58 and Arg166 to Glu185. The segment covering Ala21 to Asp39 has biased composition (polar residues). Residues Glu48–Asp111 constitute a DNA-binding region (homeobox; TALE-type).

It belongs to the TALE/TGIF homeobox family. As to expression, specifically expressed in adult testis.

The protein localises to the nucleus. Its function is as follows. May have a transcription role in testis. May act as a competitor/regulator of TGIF2LX. The chain is Homeobox protein TGIF2LY (TGIF2LY) from Homo sapiens (Human).